The following is a 223-amino-acid chain: Phosphoribosylformylglycinamidine synthase subunit PurQ (223 aa).

Positions 3-223 constitute a Glutamine amidotransferase type-1 domain; the sequence is FAVLVFPGSN…MVKSWREQNV (221 aa). The active-site Nucleophile is C85. Residues H193 and E195 contribute to the active site.

In terms of assembly, part of the FGAM synthase complex composed of 1 PurL, 1 PurQ and 2 PurS subunits.

The protein localises to the cytoplasm. The enzyme catalyses N(2)-formyl-N(1)-(5-phospho-beta-D-ribosyl)glycinamide + L-glutamine + ATP + H2O = 2-formamido-N(1)-(5-O-phospho-beta-D-ribosyl)acetamidine + L-glutamate + ADP + phosphate + H(+). It catalyses the reaction L-glutamine + H2O = L-glutamate + NH4(+). The protein operates within purine metabolism; IMP biosynthesis via de novo pathway; 5-amino-1-(5-phospho-D-ribosyl)imidazole from N(2)-formyl-N(1)-(5-phospho-D-ribosyl)glycinamide: step 1/2. Its function is as follows. Part of the phosphoribosylformylglycinamidine synthase complex involved in the purines biosynthetic pathway. Catalyzes the ATP-dependent conversion of formylglycinamide ribonucleotide (FGAR) and glutamine to yield formylglycinamidine ribonucleotide (FGAM) and glutamate. The FGAM synthase complex is composed of three subunits. PurQ produces an ammonia molecule by converting glutamine to glutamate. PurL transfers the ammonia molecule to FGAR to form FGAM in an ATP-dependent manner. PurS interacts with PurQ and PurL and is thought to assist in the transfer of the ammonia molecule from PurQ to PurL. The chain is Phosphoribosylformylglycinamidine synthase subunit PurQ from Staphylococcus epidermidis (strain ATCC 35984 / DSM 28319 / BCRC 17069 / CCUG 31568 / BM 3577 / RP62A).